The primary structure comprises 469 residues: Tubulin gamma-2 chain (469 aa).

142–148 (AGGTGSG) contributes to the GTP binding site.

This sequence belongs to the tubulin family.

It is found in the cytoplasm. The protein resides in the cytoskeleton. Its subcellular location is the microtubule organizing center. Tubulin is the major constituent of microtubules. The gamma chain is found at microtubule organizing centers (MTOC) such as the spindle poles, suggesting that it is involved in the minus-end nucleation of microtubule assembly. This chain is Tubulin gamma-2 chain (TUBG2), found in Oryza sativa subsp. japonica (Rice).